The primary structure comprises 309 residues: Aspartate carbamoyltransferase catalytic subunit (309 aa).

R55 and T56 together coordinate carbamoyl phosphate. K85 provides a ligand contact to L-aspartate. 3 residues coordinate carbamoyl phosphate: R106, H135, and Q138. L-aspartate contacts are provided by R168 and R230. Carbamoyl phosphate-binding residues include L268 and P269.

Belongs to the aspartate/ornithine carbamoyltransferase superfamily. ATCase family. In terms of assembly, heterododecamer (2C3:3R2) of six catalytic PyrB chains organized as two trimers (C3), and six regulatory PyrI chains organized as three dimers (R2).

It catalyses the reaction carbamoyl phosphate + L-aspartate = N-carbamoyl-L-aspartate + phosphate + H(+). It functions in the pathway pyrimidine metabolism; UMP biosynthesis via de novo pathway; (S)-dihydroorotate from bicarbonate: step 2/3. Catalyzes the condensation of carbamoyl phosphate and aspartate to form carbamoyl aspartate and inorganic phosphate, the committed step in the de novo pyrimidine nucleotide biosynthesis pathway. The polypeptide is Aspartate carbamoyltransferase catalytic subunit (Aliivibrio salmonicida (strain LFI1238) (Vibrio salmonicida (strain LFI1238))).